Reading from the N-terminus, the 410-residue chain is Porin-like protein GalP (410 aa).

Residues 1–25 (MKCRTLYPLVPTFALAASLPLQALA) form the signal peptide.

It belongs to the outer membrane porin (Opr) (TC 1.B.25) family.

Its function is as follows. Probable transporter, possibly involved in the gallate degradation pathway. May play a role in the uptake of low gallate concentrations that may exist in the natural habitats of P.putida. The sequence is that of Porin-like protein GalP (galP) from Pseudomonas putida (strain ATCC 47054 / DSM 6125 / CFBP 8728 / NCIMB 11950 / KT2440).